The primary structure comprises 360 residues: Photosystem II protein D1 2 (360 aa).

Residues 1-31 (MTTTLQQRESASLWEQFCQWVTSTNNRIYVG) lie on the Cytoplasmic side of the membrane. A helical transmembrane segment spans residues 32–53 (WFGTLMIPTLLTATTCFIIAFI). At 54 to 110 (AAPPVDIDGIREPVAGSLLYGNNIISGAVVPSSNAIGLHFYPIWEAASLDEWLYNGG) the chain is on the lumenal, thylakoid side. Residues 111-134 (PYQLVVFHFLIGIFCYMGRQWELS) form a helical membrane-spanning segment. Residue His118 participates in chlorophyll a binding. Position 126 (Tyr126) interacts with pheophytin a. Over 135–142 (YRLGMRPW) the chain is Cytoplasmic. The helical transmembrane segment at 143 to 161 (ICVAYSAPVSAATAVFLIY) threads the bilayer. Residue Tyr147 participates in pheophytin a binding. Residues 162–191 (PIGQGSFSDGMPLGISGTFNFMIVFQAEHN) are Lumenal, thylakoid-facing. Asp170 and Glu189 together coordinate [CaMn4O5] cluster. The chain crosses the membrane as a helical span at residues 192 to 218 (ILMHPFHMLGVAGVFGGSLFSAMHGSL). Residue His198 coordinates chlorophyll a. A quinone-binding residues include His215, Ser264, and Phe265. His215 is a Fe cation binding site. The Cytoplasmic segment spans residues 219 to 270 (VTSSLVRETTEVESQNYGYKFGQEEETYNIVAAHGYFGRLIFQYASFNNSRS). Residues 271-295 (LHFFLGAWPVIGIWFTAMGVSTMAF) form a helical membrane-spanning segment. His272 serves as a coordination point for Fe cation. Residues 296-360 (NLNGFNFNQS…VALTAPAVNG (65 aa)) are Lumenal, thylakoid-facing. [CaMn4O5] cluster-binding residues include His332, Glu333, His337, Asp342, and Ala344. The propeptide occupies 345-360 (SGEQAPVALTAPAVNG).

It belongs to the reaction center PufL/M/PsbA/D family. In terms of assembly, PSII is composed of 1 copy each of membrane proteins PsbA, PsbB, PsbC, PsbD, PsbE, PsbF, PsbH, PsbI, PsbJ, PsbK, PsbL, PsbM, PsbT, PsbX, PsbY, PsbZ, Psb30/Ycf12, peripheral proteins PsbO, CyanoQ (PsbQ), PsbU, PsbV and a large number of cofactors. It forms dimeric complexes. The D1/D2 heterodimer binds P680, chlorophylls that are the primary electron donor of PSII, and subsequent electron acceptors. It shares a non-heme iron and each subunit binds pheophytin, quinone, additional chlorophylls, carotenoids and lipids. D1 provides most of the ligands for the Mn4-Ca-O5 cluster of the oxygen-evolving complex (OEC). There is also a Cl(-1) ion associated with D1 and D2, which is required for oxygen evolution. The PSII complex binds additional chlorophylls, carotenoids and specific lipids. serves as cofactor. In terms of processing, C-terminally processed by CtpA; processing is essential to allow assembly of the oxygen-evolving complex and photosynthetic growth. Tyr-161 forms a radical intermediate that is referred to as redox-active TyrZ, YZ or Y-Z.

The protein resides in the cellular thylakoid membrane. The enzyme catalyses 2 a plastoquinone + 4 hnu + 2 H2O = 2 a plastoquinol + O2. Photosystem II (PSII) is a light-driven water:plastoquinone oxidoreductase that uses light energy to abstract electrons from H(2)O, generating O(2) and a proton gradient subsequently used for ATP formation. It consists of a core antenna complex that captures photons, and an electron transfer chain that converts photonic excitation into a charge separation. The D1/D2 (PsbA/PsbD) reaction center heterodimer binds P680, the primary electron donor of PSII as well as several subsequent electron acceptors. The sequence is that of Photosystem II protein D1 2 from Synechocystis sp. (strain ATCC 27184 / PCC 6803 / Kazusa).